We begin with the raw amino-acid sequence, 1469 residues long: ABC transporter G family member 36 (1469 aa).

Met1 bears the N-acetylmethionine mark. Phosphoserine occurs at positions 37, 38, and 40. Residue Thr43 is modified to Phosphothreonine. Position 45 is a phosphoserine (Ser45). An ABC transporter 1 domain is found at 171-444 (LGMIGIQFAK…FESFGFKCPE (274 aa)). 204-211 (GPPSSGKT) is an ATP binding site. The ABC transmembrane type-2 1 domain occupies 522 to 735 (ELLKSCWDKE…AFNGLVVNEM (214 aa)). Helical transmembrane passes span 540–560 (FFYVFKTVQIVIIAAITSTLF), 575–595 (LYIGALLFGMIINMFNGFAEM), 621–641 (LPTFLLGIPSSILESTAWMVV), 659–679 (FLLVFLIQQMAASLFRLIASV), 685–705 (IANTGGALTLLLVFLLGGFLL), 713–733 (WWGWAYWVSPLTYAFNGLVVN), and 772–792 (ISVGALLCFTALFNILFTLAL). A disordered region spans residues 806–852 (PEEENEDADQGKDPMRRSLSTADGNRRGEVAMGRMSRDSAAEASGGA). Phosphoserine is present on residues Ser825, Ser841, and Ser844. The span at 829-845 (GNRRGEVAMGRMSRDSA) shows a compositional bias: basic and acidic residues. The 253-residue stretch at 867 to 1119 (MSFDDVKYFV…KVVEYFESFP (253 aa)) folds into the ABC transporter 2 domain. 912–919 (GVSGAGKT) provides a ligand contact to ATP. Residues 1192–1406 (GQFKSCLWKQ…TVYGLIVSQY (215 aa)) enclose the ABC transmembrane type-2 2 domain. The next 7 membrane-spanning stretches (helical) occupy residues 1216–1236 (FIFTLATSLLIGTVFWQIGGN), 1239–1259 (NAGDLTMVIGALYAAIIFVGI), 1299–1319 (LPYVLIQTVYYSLIVYAMVGF), 1326–1346 (FFWFVFVSYFSFLYWTYYGMM), 1356–1376 (VASIFASAFYGIFNLFSGFFI), 1384–1404 (WWIWYYWICPVAWTVYGLIVS), and 1441–1461 (PVAAVLIAFTVFFAFIFAFCI).

It belongs to the ABC transporter superfamily. ABCG family. PDR (TC 3.A.1.205) subfamily. As to quaternary structure, interacts, in a Ca(2+)-dependent manner, with calmodulins CaM3, CaM7 and several CaM-like proteins (CML8, CML9, CML12/CAL4, CML37 and CML38), as well as with calcium regulated proteins CBL4/SOS3 and KIC. Phosphorylated upon perception of pathogen-associated molecular patterns (PAMPs); phosphorylations at Ser-40 and Ser-45, which likely regulate transport activity, are required for plant defense against pathogens (e.g. Blumeria graminis), but dispensable for recruitment to the host-pathogen interface and penetration sites. Phosphorylation at Ser-841 seems to be required for protein stability. In terms of tissue distribution, ubiquitous (at protein level). Higher levels in root hairs, stomata, epidermal cells, and hydathodes. Concentrated at the infection site of infected plants, including papillae and haustoria. Accumulates at the periphery of lateral root cap and root epidermal cells, especially in the outer lateral membrane domain facing the environment.

Its subcellular location is the cell membrane. The protein resides in the golgi apparatus. It is found in the trans-Golgi network membrane. The protein localises to the endoplasmic reticulum membrane. Its function is as follows. Together with ABCG37, regulates auxin homeostasis and responses by playing a dual role in coumarin (e.g. esculin) and in the auxin precursor indole 3-butyric acid (IBA) efflux transport, thus influencing cotyledons, roots and root hairs development. Mediates the transport (export into the apoplast) of distinct indole-type metabolites in distinct biological processes; a precursor of 4-O-beta-D-glucosyl-indol-3-yl formamide (4OGlcI3F), a pathogen-inducible tryptophan-derived compound (e.g. upon Blumeria graminis conidiospore inoculation), being a probable substrate in extracellular pathogen defense. Involved in the cellular detoxification of xenobiotics by promoting the excretion of some auxinic herbicides including 4-(2,4-dichlorophenoxy)butyric acid (2,4-DB) and other members of the phenoxyalkanoic acid family but not 2,4-dichlorophenoxyacetic acid (2,4-D). Mediates thymidine exudation in the rhizosphere. May be a transporter of lignin precursors during tracheary element differentiation. Key factor that controls the extent of cell death in the defense response. Necessary for both callose deposition and glucosinolate activation in response to pathogens. As a central component of nonhost resistance (NHR), required for limiting invasion by nonadapted pathogens including powdery mildews (e.g. Blumeria graminis and Erysiphe pisi), root-penetrating pathogenic fungi (e.g. Fusarium oxysporum), Phakopsora pachyrhizi and Colletotrichum gloeosporioides (anthracnose fungi), probably by sensing Ca(2+) via interactions with calmodulins (e.g. CaM7). Confers resistance to cadmium (Cd) and lead (Pb), probably as an efflux pump of Cd2+ or Cd conjugates, and possibly, of chemicals that mediate pathogen resistance. Promotes resistance to abiotic stresses (e.g. drought and salt stress) and favors general growth by preventing sodium accumulation in plants. Required for microbe-associated molecular patterns (MAMPs)- and salicylic acid (SA)-dependent hypersensitive cell death (HR), involving indole glucosinolate breakdown products (e.g. indole-3-acetonitrile), probably in a PEN2 myrosinase-dependent metabolic pathway, triggered by the recognition of effectors from incompatible pathogens including oomycetes and bacteria (e.g. AvrRpm1 and AvrRps4) and benzothiadiazole- (BTH), and leading to an induced protection against pathogens (e.g. Pseudomonas syringae pv. tomato DC3000, Golovinomyces orontii and Hyaloperonospora arabidopsidis). The chain is ABC transporter G family member 36 from Arabidopsis thaliana (Mouse-ear cress).